We begin with the raw amino-acid sequence, 414 residues long: Alanine--glyoxylate aminotransferase (414 aa).

The transit peptide at 1-23 directs the protein to the mitochondrion; sequence MFRMLAKASVTLGSRAAGWVRTM. N6-(pyridoxal phosphate)lysine is present on Lys231. Lys247 bears the N6-acetyllysine; alternate mark. Lys247 is modified (N6-succinyllysine; alternate). Lys256 bears the N6-acetyllysine mark. Lys330 carries the post-translational modification N6-acetyllysine; alternate. Lys330 carries the N6-succinyllysine; alternate modification. Lys334 is subject to N6-acetyllysine. Arg382 contributes to the substrate binding site. The Microbody targeting signal signature appears at 412 to 414; the sequence is NKL.

The protein belongs to the class-V pyridoxal-phosphate-dependent aminotransferase family. As to quaternary structure, homodimer. The cofactor is pyridoxal 5'-phosphate.

Its subcellular location is the peroxisome. The protein localises to the mitochondrion matrix. It catalyses the reaction L-serine + pyruvate = 3-hydroxypyruvate + L-alanine. The enzyme catalyses glyoxylate + L-alanine = glycine + pyruvate. Catalyzes the transamination of glyoxylate to glycine and contributes to the glyoxylate detoxification. Functionally, catalyzes the transamination between L-serine and pyruvate and weakly contributes to gluconeogenesis from the L-serine metabolism. This is Alanine--glyoxylate aminotransferase from Mus musculus (Mouse).